A 134-amino-acid polypeptide reads, in one-letter code: Histone H2A (134 aa).

Residues 1–10 (MTGGKSGGKA) show a composition bias toward gly residues. Residues 1–24 (MTGGKSGGKASGSKNAQSRSSKAG) are disordered. N6-acetyllysine is present on residues Lys5 and Lys9. An N5-methylglutamine modification is found at Gln106. Positions 115-134 (QNLLPKKTPKSGKGPGSQEL) are disordered. Ser131 bears the Phosphoserine mark. The [ST]-Q motif signature appears at 131 to 132 (SQ).

It belongs to the histone H2A family. In terms of assembly, the nucleosome is a histone octamer containing two molecules each of H2A, H2B, H3 and H4 assembled in one H3-H4 heterotetramer and two H2A-H2B heterodimers. The octamer wraps approximately 147 bp of DNA. Phosphorylated to form H2AS128ph (gamma-H2A) in response to DNA double-strand breaks (DSBs) generated by exogenous genotoxic agents and by stalled replication forks. Phosphorylation is dependent on the DNA damage checkpoint kinases mec1/ATR and tel1/ATM, spreads on either side of a detected DSB site and may mark the surrounding chromatin for recruitment of proteins required for DNA damage signaling and repair. Gamma-H2A is removed from the DNA prior to the strand invasion-primer extension step of the repair process and subsequently dephosphorylated. Dephosphorylation is necessary for efficient recovery from the DNA damage checkpoint. Post-translationally, acetylated by esa1 to form H2AK4ac and H2AK7ac.

It localises to the nucleus. The protein localises to the chromosome. Core component of nucleosome which plays a central role in DNA double strand break (DSB) repair. Nucleosomes wrap and compact DNA into chromatin, limiting DNA accessibility to the cellular machineries which require DNA as a template. Histones thereby play a central role in transcription regulation, DNA repair, DNA replication and chromosomal stability. DNA accessibility is regulated via a complex set of post-translational modifications of histones, also called histone code, and nucleosome remodeling. The polypeptide is Histone H2A (httA) (Aspergillus niger (strain ATCC MYA-4892 / CBS 513.88 / FGSC A1513)).